We begin with the raw amino-acid sequence, 168 residues long: Xanthine-guanine phosphoribosyltransferase (168 aa).

Residues arginine 46 to glycine 47 and aspartate 101 to threonine 109 each bind 5-phospho-alpha-D-ribose 1-diphosphate. Aspartate 102 is a Mg(2+) binding site. Aspartate 105 is a guanine binding site. Xanthine is bound by residues aspartate 105 and valine 148. GMP contacts are provided by residues aspartate 105–threonine 109 and tryptophan 147–valine 148.

It belongs to the purine/pyrimidine phosphoribosyltransferase family. XGPT subfamily. As to quaternary structure, homotetramer. It depends on Mg(2+) as a cofactor.

It localises to the cell inner membrane. It carries out the reaction GMP + diphosphate = guanine + 5-phospho-alpha-D-ribose 1-diphosphate. The catalysed reaction is XMP + diphosphate = xanthine + 5-phospho-alpha-D-ribose 1-diphosphate. It catalyses the reaction IMP + diphosphate = hypoxanthine + 5-phospho-alpha-D-ribose 1-diphosphate. It functions in the pathway purine metabolism; GMP biosynthesis via salvage pathway; GMP from guanine: step 1/1. The protein operates within purine metabolism; XMP biosynthesis via salvage pathway; XMP from xanthine: step 1/1. Purine salvage pathway enzyme that catalyzes the transfer of the ribosyl-5-phosphate group from 5-phospho-alpha-D-ribose 1-diphosphate (PRPP) to the N9 position of the 6-oxopurines guanine and xanthine to form the corresponding ribonucleotides GMP (guanosine 5'-monophosphate) and XMP (xanthosine 5'-monophosphate), with the release of PPi. To a lesser extent, also acts on hypoxanthine. The sequence is that of Xanthine-guanine phosphoribosyltransferase from Gluconobacter oxydans (strain 621H) (Gluconobacter suboxydans).